The following is a 252-amino-acid chain: RNA-binding protein 7 (252 aa).

The 78-residue stretch at 9-86 (RTLFVGNLDP…RQLNIKFKTG (78 aa)) folds into the RRM domain. Polar residues-rich tracts occupy residues 88–107 (SHINQEGKSPANSQNPSPAN) and 119–137 (QMGSPSYSPPQHMQRPFSS). Disordered stretches follow at residues 88–137 (SHIN…PFSS) and 171–252 (QLRG…WKHF). Basic and acidic residues-rich tracts occupy residues 211–230 (ERNRRDGQRGDFYHHDDRSG) and 237–252 (PPDRRRDSREGRWKHF).

As to quaternary structure, component of the nuclear exosome targeting (NEXT) complex composed of MTREX, ZCCHC8, and RBM7 that directs a subset of non-coding short-lived RNAs for exosomal degradation.

Its subcellular location is the nucleus. It is found in the nucleoplasm. Its function is as follows. RNA-binding subunit of the trimeric nuclear exosome targeting (NEXT) complex, a complex that functions as an RNA exosome cofactor that directs a subset of non-coding short-lived RNAs for exosomal degradation. NEXT is involved in surveillance and turnover of aberrant transcripts and non-coding RNAs. Binds preferentially polyuridine sequences and associates with newly synthesized RNAs, including pre-mRNAs and short-lived exosome substrates such as promoter upstream transcripts (PROMPTs), enhancer RNAs (eRNAs), and 3'-extended products from small nuclear RNAs (snRNAs). The polypeptide is RNA-binding protein 7 (Danio rerio (Zebrafish)).